We begin with the raw amino-acid sequence, 227 residues long: 2-C-methyl-D-erythritol 4-phosphate cytidylyltransferase (227 aa).

This sequence belongs to the IspD/TarI cytidylyltransferase family. IspD subfamily.

The catalysed reaction is 2-C-methyl-D-erythritol 4-phosphate + CTP + H(+) = 4-CDP-2-C-methyl-D-erythritol + diphosphate. The protein operates within isoprenoid biosynthesis; isopentenyl diphosphate biosynthesis via DXP pathway; isopentenyl diphosphate from 1-deoxy-D-xylulose 5-phosphate: step 2/6. Catalyzes the formation of 4-diphosphocytidyl-2-C-methyl-D-erythritol from CTP and 2-C-methyl-D-erythritol 4-phosphate (MEP). This chain is 2-C-methyl-D-erythritol 4-phosphate cytidylyltransferase, found in Caldanaerobacter subterraneus subsp. tengcongensis (strain DSM 15242 / JCM 11007 / NBRC 100824 / MB4) (Thermoanaerobacter tengcongensis).